The following is a 275-amino-acid chain: 1-deoxy-11-beta-hydroxypentalenate dehydrogenase (275 aa).

NAD(+) is bound at residue 12 to 36 (GAASGIGLALSARFARAGAGVVMAD). S144 serves as a coordination point for substrate. Y157 (proton acceptor) is an active-site residue. K161 contributes to the NAD(+) binding site.

It belongs to the short-chain dehydrogenases/reductases (SDR) family.

The enzyme catalyses 1-deoxy-11beta-hydroxypentalenate + NAD(+) = 1-deoxy-11-oxopentalenate + NADH + H(+). The protein operates within antibiotic biosynthesis; pentalenolactone biosynthesis. Its function is as follows. Catalyzes the oxidation of 1-deoxy-11-beta-hydroxypentalenic acid to 1-deoxy-11-oxopentalenic acid in the biosynthesis of pentalenolactone antibiotic. The protein is 1-deoxy-11-beta-hydroxypentalenate dehydrogenase (penF) of Streptomyces exfoliatus (Streptomyces hydrogenans).